Consider the following 570-residue polypeptide: Putative ABC transporter ATP-binding protein SAV2684 (570 aa).

ABC transporter domains follow at residues 6 to 247 (ISFK…GIRE) and 304 to 537 (LELN…ASLR). Residues 40-47 (GASGSGKS) and 338-345 (GHNGAGKS) each bind ATP.

The protein belongs to the ABC transporter superfamily.

The protein localises to the cell membrane. In terms of biological role, probably part of an ABC transporter complex. Responsible for energy coupling to the transport system. This chain is Putative ABC transporter ATP-binding protein SAV2684, found in Staphylococcus aureus (strain Mu50 / ATCC 700699).